Consider the following 488-residue polypeptide: N-succinylglutamate 5-semialdehyde dehydrogenase (488 aa).

Position 221-226 (221-226 (GSSRTG)) interacts with NAD(+). Catalysis depends on residues Glu-244 and Cys-278.

This sequence belongs to the aldehyde dehydrogenase family. AstD subfamily.

It carries out the reaction N-succinyl-L-glutamate 5-semialdehyde + NAD(+) + H2O = N-succinyl-L-glutamate + NADH + 2 H(+). It functions in the pathway amino-acid degradation; L-arginine degradation via AST pathway; L-glutamate and succinate from L-arginine: step 4/5. Catalyzes the NAD-dependent reduction of succinylglutamate semialdehyde into succinylglutamate. The sequence is that of N-succinylglutamate 5-semialdehyde dehydrogenase from Pseudomonas syringae pv. syringae (strain B728a).